Consider the following 481-residue polypeptide: UDP-N-acetylmuramoyl-L-alanyl-D-glutamate--L-lysine ligase (481 aa).

Ser42 contributes to the UDP-N-acetyl-alpha-D-muramoyl-L-alanyl-D-glutamate binding site. ATP is bound at residue 118–124 (GTKGKTT). UDP-N-acetyl-alpha-D-muramoyl-L-alanyl-D-glutamate contacts are provided by residues Gln158, 160–161 (TT), Ser187, and Arg195. Position 229 is an N6-carboxylysine (Lys229). Positions 404-407 (DDPN) match the L-lysine recognition motif motif.

It belongs to the MurCDEF family. MurE subfamily. In terms of processing, carboxylation is probably crucial for Mg(2+) binding and, consequently, for the gamma-phosphate positioning of ATP.

It is found in the cytoplasm. It catalyses the reaction UDP-N-acetyl-alpha-D-muramoyl-L-alanyl-D-glutamate + L-lysine + ATP = UDP-N-acetyl-alpha-D-muramoyl-L-alanyl-gamma-D-glutamyl-L-lysine + ADP + phosphate + H(+). The protein operates within cell wall biogenesis; peptidoglycan biosynthesis. Its function is as follows. Catalyzes the addition of L-lysine to the nucleotide precursor UDP-N-acetylmuramoyl-L-alanyl-D-glutamate (UMAG) in the biosynthesis of bacterial cell-wall peptidoglycan. The chain is UDP-N-acetylmuramoyl-L-alanyl-D-glutamate--L-lysine ligase from Streptococcus pyogenes serotype M18 (strain MGAS8232).